Consider the following 384-residue polypeptide: uncharacterized protein (384 aa).

This is an uncharacterized protein from Nostoc sp. (strain PCC 7120 / SAG 25.82 / UTEX 2576).